The chain runs to 627 residues: Carnitine O-acetyltransferase, mitochondrial (627 aa).

The active-site Proton acceptor is His336. Residues Lys418 and 422–429 contribute to the CoA site; that span reads KKFKVSPD. 3 residues coordinate (R)-carnitine: Tyr451, Ser453, and Thr464. Position 553 (Gln553) interacts with CoA. A Microbody targeting signal motif is present at residues 625 to 627; sequence PKL.

It belongs to the carnitine/choline acetyltransferase family.

It localises to the peroxisome. It is found in the mitochondrion inner membrane. The enzyme catalyses (R)-carnitine + acetyl-CoA = O-acetyl-(R)-carnitine + CoA. Carnitine acetylase is specific for short chain fatty acids. Carnitine acetylase seems to affect the flux through the pyruvate dehydrogenase complex. It may be involved as well in the transport of acetyl-CoA into mitochondria. The protein is Carnitine O-acetyltransferase, mitochondrial (CAT2) of Candida tropicalis (Yeast).